The sequence spans 286 residues: L-cysteine S-thiosulfotransferase subunit SoxA (286 aa).

An N-terminal signal peptide occupies residues 1 to 26 (MTVSKRFLAPVFAMVGGLVLAFSANA). A Cytochrome c domain is found at 80–166 (LAVERGADIW…ALTSYIKHQS (87 aa)). Heme-binding residues include Cys100, Cys103, His104, Cys138, Cys202, Cys205, and His206. Residue Arg243 participates in substrate binding. A heme-binding site is contributed by Cys247. The Cysteine persulfide intermediate role is filled by Cys247.

It belongs to the SoxA family. As to quaternary structure, heterodimer of SoxA and SoxX. The cofactor is heme. Cysteine persulfide at Cys-247.

It localises to the periplasm. The catalysed reaction is L-cysteinyl-[SoxY protein] + thiosulfate + 2 Fe(III)-[cytochrome c] = S-sulfosulfanyl-L-cysteinyl-[SoxY protein] + 2 Fe(II)-[cytochrome c] + 2 H(+). The enzyme catalyses S-sulfanyl-L-cysteinyl-[SoxY protein] + thiosulfate + 2 Fe(III)-[cytochrome c] = S-(2-sulfodisulfanyl)-L-cysteinyl-[SoxY protein] + 2 Fe(II)-[cytochrome c] + 2 H(+). In terms of biological role, C-type diheme cytochrome, which is part of the SoxAX cytochrome complex involved in sulfur oxidation. The SoxAX complex catalyzes the formation of a heterodisulfide bond between the conserved cysteine residue on a sulfur carrier SoxYZ complex subunit SoxY and thiosulfate or other inorganic sulfur substrates. This leads to the liberation of two electrons, which may be transferred from the SoxAX complex to another cytochrome c that then channels them into the respiratory electron transport chain. Some electrons may be used for reductive CO(2) fixation. The polypeptide is L-cysteine S-thiosulfotransferase subunit SoxA (Pseudaminobacter salicylatoxidans).